We begin with the raw amino-acid sequence, 116 residues long: Nucleoid-associated protein P9515_00191 (116 aa).

Residues 89–98 (STTTMKERMN) are compositionally biased toward basic and acidic residues. Residues 89-116 (STTTMKERMNDLTGGLNLNLPGLDNNDS) are disordered. Over residues 99–116 (DLTGGLNLNLPGLDNNDS) the composition is skewed to low complexity.

This sequence belongs to the YbaB/EbfC family. Homodimer.

The protein localises to the cytoplasm. Its subcellular location is the nucleoid. Binds to DNA and alters its conformation. May be involved in regulation of gene expression, nucleoid organization and DNA protection. This chain is Nucleoid-associated protein P9515_00191, found in Prochlorococcus marinus (strain MIT 9515).